The chain runs to 345 residues: MARLEDPTALTQLPDESARVRYTSSELQDYFETLKFPQRFLDLGNSVLKDPSLARTKENGLPLLQAITRYHTCNVPFENLVLHYDPHKIVTLDPAELYTKIVTRRRGGRCMENNIFLGTALRSLGYEVRNCGGRVSRAMSPYPEVRKNQSATYDGWNHMLLLVFLGDEWYGVDVGMGSMGPNLPFPLQDGFESLSIAPREIRIQKRSISETHATGPSHATKMWCYDVCYNPAESKKTWTPVYCFTETEFLPQDYEVMSWFTSTNPRSFFTRYITCTKMIMDEDKEVIIGNLTLFKDTVRETIGSDRKVVKKFETEEERIKGLVEIFDVNLTEEEKNSLPQEKRLA.

Residue Cys-110 is the Acyl-thioester intermediate of the active site. Catalysis depends on His-158, which acts as the Proton acceptor. Asp-173 is a catalytic residue.

Belongs to the arylamine N-acetyltransferase family.

It functions in the pathway xenobiotic degradation. Its function is as follows. N-malonyltransferase; part of the Fusarium detoxification of benzoxazolinone cluster 2 (FDB2) involved in the degradation of benzoxazolinones produced by the host plant. Maize, wheat, and rye produce the 2 benzoxazinone phytoanticipins 2,4-dihy-droxy-7-methoxy-1,4-benzoxazin-3-one (DIMBOA) and 2,4-dihydroxy-1,4-benzoxazin-3-one (DIBOA) that, due to their inherent instability once released, spontaneously degrade to the more stable corresponding benzoxazolinones, 6-methoxy-2-benzoxazolinone (MBOA) and 2-benzoxazolinone (BOA), respectively. The first step in the detoxification of benzoxazolinones involves the hydrolysis of the cyclic ester bond of benzoxazolinones by the FDB1 cluster gamma-lactamase MBL1 to aminophenols. MBL1 is able to convert BOA into 2-aminophenol (2-AP), as well as MBOA into 5-methoxy-2-aminophenol (2-AMP). The FDB2 cluster N-malonyltransferase FDB2/NAT1 then metabolizes aminophenols via N-malonylation to non-toxic malonamic acids. FDB2/NAT1 converts 2-AP into N-(2-hydroxyphenyl) malonamic acid (HPMA) and 2-AMP into N-(2-hydroxy-4-methoxyphenyl) malonamic acid (HMPMA). The duplicated dienlactone hydrolases DLH1 and DLH2 may provide redundant function for hydrolyzing the lactone moiety in the BOA molecule. The roles of the amidases an other enzymes encoded by the 2 FDB clusters have not been identified so far. This Gibberella moniliformis (strain M3125 / FGSC 7600) (Maize ear and stalk rot fungus) protein is N-malonyltransferase FDB2.